Consider the following 166-residue polypeptide: Large ribosomal subunit protein uL10 (166 aa).

This sequence belongs to the universal ribosomal protein uL10 family. As to quaternary structure, part of the ribosomal stalk of the 50S ribosomal subunit. The N-terminus interacts with L11 and the large rRNA to form the base of the stalk. The C-terminus forms an elongated spine to which L12 dimers bind in a sequential fashion forming a multimeric L10(L12)X complex.

Its function is as follows. Forms part of the ribosomal stalk, playing a central role in the interaction of the ribosome with GTP-bound translation factors. The protein is Large ribosomal subunit protein uL10 of Flavobacterium psychrophilum (strain ATCC 49511 / DSM 21280 / CIP 103535 / JIP02/86).